Consider the following 604-residue polypeptide: Elongation factor 4 (604 aa).

The tr-type G domain maps to 8 to 190 (DKIRNFSIIA…AIVNRLPPPR (183 aa)). Residues 20-25 (DHGKST) and 137-140 (NKID) each bind GTP.

This sequence belongs to the TRAFAC class translation factor GTPase superfamily. Classic translation factor GTPase family. LepA subfamily.

It localises to the cell inner membrane. It carries out the reaction GTP + H2O = GDP + phosphate + H(+). Functionally, required for accurate and efficient protein synthesis under certain stress conditions. May act as a fidelity factor of the translation reaction, by catalyzing a one-codon backward translocation of tRNAs on improperly translocated ribosomes. Back-translocation proceeds from a post-translocation (POST) complex to a pre-translocation (PRE) complex, thus giving elongation factor G a second chance to translocate the tRNAs correctly. Binds to ribosomes in a GTP-dependent manner. This is Elongation factor 4 from Hyphomonas neptunium (strain ATCC 15444).